We begin with the raw amino-acid sequence, 150 residues long: Large ribosomal subunit protein bL9 (150 aa).

It belongs to the bacterial ribosomal protein bL9 family.

Functionally, binds to the 23S rRNA. The polypeptide is Large ribosomal subunit protein bL9 (Neisseria meningitidis serogroup B (strain ATCC BAA-335 / MC58)).